The following is an 831-amino-acid chain: Phenylalanine--tRNA ligase beta subunit (831 aa).

The region spanning 44–155 (GPVDGPVTVG…GAAEPGADGA (112 aa)) is the tRNA-binding domain. The region spanning 414–489 (WSPPPIRMGV…RLEGLEVIPS (76 aa)) is the B5 domain. Mg(2+) is bound by residues aspartate 467, aspartate 473, glutamate 476, and glutamate 477. One can recognise an FDX-ACB domain in the interval 737 to 830 (SPYPAVFQDV…AAERVGAVLR (94 aa)).

Belongs to the phenylalanyl-tRNA synthetase beta subunit family. Type 1 subfamily. Tetramer of two alpha and two beta subunits. The cofactor is Mg(2+).

It is found in the cytoplasm. The catalysed reaction is tRNA(Phe) + L-phenylalanine + ATP = L-phenylalanyl-tRNA(Phe) + AMP + diphosphate + H(+). This is Phenylalanine--tRNA ligase beta subunit from Mycobacterium bovis (strain ATCC BAA-935 / AF2122/97).